Consider the following 265-residue polypeptide: Mlc titration factor A (265 aa).

Positions 111, 148, 152, and 211 each coordinate Zn(2+).

It belongs to the MtfA family. As to quaternary structure, interacts with Mlc. Requires Zn(2+) as cofactor.

The protein resides in the cytoplasm. Its function is as follows. Involved in the modulation of the activity of the glucose-phosphotransferase system (glucose-PTS). Interacts with the transcriptional repressor Mlc, preventing its interaction with DNA and leading to the modulation of expression of genes regulated by Mlc, including ptsG, which encodes the PTS system glucose-specific EIICB component. In terms of biological role, shows zinc-dependent metallopeptidase activity. The sequence is that of Mlc titration factor A from Escherichia coli O127:H6 (strain E2348/69 / EPEC).